The chain runs to 979 residues: Receptor-type tyrosine-protein phosphatase-like N (979 aa).

The first 37 residues, Met1–Ala37, serve as a signal peptide directing secretion. The tract at residues Ile38–Pro134 is RESP18 homology domain. Topologically, residues Ile38–Arg575 are lumenal. Residues Cys56 and Cys65 are joined by a disulfide bond. The span at Met113–Ser130 shows a compositional bias: basic and acidic residues. Disordered regions lie at residues Met113–Leu173, Gly289–Pro330, and Met392–Val443. Positions Thr145–Ala155 are enriched in polar residues. The segment covering Arg303–Lys322 has biased composition (basic and acidic residues). Residues Ser307 and Ser308 each carry the phosphoserine modification. Positions Ser414–Leu424 are enriched in polar residues. Positions Ser449–Arg575 are sufficient for dimerization of proICA512. Asn506 and Asn524 each carry an N-linked (GlcNAc...) asparagine glycan. A helical transmembrane segment spans residues Ser576–Met600. Residues Arg601–Glu732 form a sufficient for dimerization of proICA512 region. Over Arg601 to Gln979 the chain is Cytoplasmic. The interval Arg644 to Glu680 is disordered. Low complexity predominate over residues Gln648–Ser677. The region spanning Leu709–Glu969 is the Tyrosine-protein phosphatase domain. Residue Lys754 forms a Glycyl lysine isopeptide (Lys-Gly) (interchain with G-Cter in SUMO) linkage.

Belongs to the protein-tyrosine phosphatase family. Receptor class 8 subfamily. Homodimer; shown for the unprocessed protein (proICA512) in the endoplasmic reticulum and resolved during protein maturation as ICA512-TMF seems to be predominantly monomeric in secretory granules; however, ICA512-CCF interacts with ICA512-TMF disrupting the ICA512-TMF:SNTB2 complex. The isolated lumenal RESP18 homology domain has been shown to form disulfide-linked homooligomers. Interacts (via cytoplasmic domain) with phosphorylated SNTB2; this protects PTPRN against cleavage by CAPN1 to produce ICA512-CCF. Dephosphorylation of SNTB2 upon insulin stimulation disrupts the interaction and results in PTPRN cleavage. Interacts with SNX19. ICA512-CCF interacts with PIAS4; in the nucleus. Interacts with STAT5B (phosphorylated); down-regulated by ICA512-CCF sumoylation; ICA512-CCF prevents STAT5B dephosphorylation; ICA512-CCF mediates interaction of STAT5B with PIAS4. Interacts (via RESP18 homology domain) with insulin and proinsulin. Interacts with PTPRN2, PTPRA and PTPRE. Subject to proteolytic cleavage at multiple sites. Subject to cleavage on a pair of basic residues. On exocytosis of secretory granules in pancreatic beta-cells ICA512-TMF is transiently inserted in the plasma-membrane and cleaved by mu-type calpain CPN1 to yield ICA512-CCF. In terms of processing, O-glycosylated. Post-translationally, N-glycosylated. Sumoylated at two sites including Lys-754. Sumoylation decreases interaction with STAT5. Detected in pituitary. Detected in brain (at protein level). Detected in brain. Weakly expressed in the colon, intestine, stomach and pancreas.

The protein resides in the membrane. It is found in the cytoplasmic vesicle. Its subcellular location is the secretory vesicle membrane. The protein localises to the perikaryon. It localises to the cell projection. The protein resides in the axon. It is found in the synapse. Its subcellular location is the cell membrane. The protein localises to the endosome. It localises to the nucleus. Its function is as follows. Plays a role in vesicle-mediated secretory processes. Required for normal accumulation of secretory vesicles in hippocampus, pituitary and pancreatic islets. Required for the accumulation of normal levels of insulin-containing vesicles and preventing their degradation. Plays a role in insulin secretion in response to glucose stimuli. Required for normal accumulation of the neurotransmitters norepinephrine, dopamine and serotonin in the brain. In females, but not in males, required for normal accumulation and secretion of pituitary hormones, such as luteinizing hormone (LH) and follicle-stimulating hormone (FSH). Seems to lack intrinsic enzyme activity. Required to maintain normal levels of renin expression and renin release. May regulate catalytic active protein-tyrosine phosphatases such as PTPRA through dimerization. Functionally, ICA512-TMF regulates dynamics and exocytosis of insulin secretory granules (SGs); binding of ICA512-TMF to SNTB2/beta-2-syntrophin is proposed to restrain SGs mobility and exocytosis by tethering them to the actin cytoskeleton depending on UTRN; the function is inhibited by cytoplasmic ICA512-CFF dimerizing with ICA512-TMF and displacing SNTB2. ICA512-CCF translocated to the nucleus promotes expression of insulin and other granule-related genes; the function implicates binding to and regulating activity of STAT5B probably by preventing its dephosphorylation and potentially by inducing its sumoylation by recruiting PIAS4. Enhances pancreatic beta-cell proliferation by converging with signaling by STAT5B and STAT3. ICA512-CCF located in the cytoplasm regulates dynamics and exocytosis of insulin secretory granules (SGs) by dimerizing with ICA512-TMF and displacing SNTB2 thus enhancing SGs mobility and exocytosis. The chain is Receptor-type tyrosine-protein phosphatase-like N (Ptprn) from Mus musculus (Mouse).